Here is a 61-residue protein sequence, read N- to C-terminus: Small ribosomal subunit protein uS14 (61 aa).

Residues C24, C27, C40, and C43 each coordinate Zn(2+).

This sequence belongs to the universal ribosomal protein uS14 family. Zinc-binding uS14 subfamily. As to quaternary structure, part of the 30S ribosomal subunit. Contacts proteins S3 and S10. It depends on Zn(2+) as a cofactor.

Functionally, binds 16S rRNA, required for the assembly of 30S particles and may also be responsible for determining the conformation of the 16S rRNA at the A site. This is Small ribosomal subunit protein uS14 from Elusimicrobium minutum (strain Pei191).